The chain runs to 152 residues: Transcriptional regulator MraZ (152 aa).

SpoVT-AbrB domains lie at 5-52 and 81-124; these read ATLV…PLPE and ASEC…DETT.

It belongs to the MraZ family. Forms oligomers.

Its subcellular location is the cytoplasm. The protein resides in the nucleoid. Negatively regulates its own expression and that of the subsequent genes in the proximal part of the division and cell wall (dcw) gene cluster. Acts by binding directly to DNA. May also regulate the expression of genes outside the dcw cluster. This is Transcriptional regulator MraZ from Escherichia fergusonii (strain ATCC 35469 / DSM 13698 / CCUG 18766 / IAM 14443 / JCM 21226 / LMG 7866 / NBRC 102419 / NCTC 12128 / CDC 0568-73).